A 622-amino-acid chain; its full sequence is Polyprotein p69 (622 aa).

Residues Met1–Gly248 enclose the Peptidase C7 domain. Catalysis depends on for papain-like protease p29 activity residues Cys162 and His215.

Post-translationally, autocatalytically processed.

Functionally, P40 protein is involved in reduction of conidiation of the host. Not necessary for replication. Also involved in reduction of orange pigmentation of the host. In terms of biological role, cysteine protease of the peptidase family C7 that contributes to hypovirulence-associated traits like the reduction in conidiation and laccase activity, but not to virulence attenuation. Acts as a suppressor of RNA-mediated gene silencing, also known as post-transcriptional gene silencing (PTGS), a mechanism of viral defense that limits the accumulation of viral RNAs. Enhances viral dsRNA accumulation and virus transmission. Also involved in the reduction in orange pigmentation of the host, an effect independent of the intrinsic protease activity. The polypeptide is Polyprotein p69 (Cryphonectria hypovirus 1 (strain Euro7) (CHV-1/Euro7)).